Here is a 978-residue protein sequence, read N- to C-terminus: Regulator of MON1-CCZ1 complex homolog (978 aa).

Composition is skewed to low complexity over residues 311 to 351 (TSTP…MISS) and 479 to 495 (NNNN…NNNN). Disordered regions lie at residues 311-363 (TSTP…HKEQ), 474-546 (SINQ…NSKT), 558-665 (KQQQ…NNHV), and 703-727 (EKEK…NNNI). A compositionally biased stretch (polar residues) spans 496-515 (TAQTLNSTGNLSNSISIGGM). The segment covering 516–539 (NTSTDNLTTTTTTSSSISSSPSNS) has biased composition (low complexity). The segment covering 582–591 (GDGGSGGSGG) has biased composition (gly residues). 2 stretches are compositionally biased toward low complexity: residues 592-663 (SFYN…NNNN) and 710-727 (NNNN…NNNI). The Mic1 domain maps to 735–908 (KLELDSKYLI…HPSFDKYIKL (174 aa)). Residues 955–978 (NNSSPTLRSSNSLNSSPRLQYSNN) form a disordered region.

It belongs to the RMC1 family.

It localises to the lysosome membrane. It is found in the late endosome membrane. Its function is as follows. May have a role in autophagy. The polypeptide is Regulator of MON1-CCZ1 complex homolog (Dictyostelium discoideum (Social amoeba)).